Reading from the N-terminus, the 116-residue chain is Large ribosomal subunit protein bL20c (116 aa).

Belongs to the bacterial ribosomal protein bL20 family.

It localises to the plastid. The protein resides in the chloroplast. Its function is as follows. Binds directly to 23S ribosomal RNA and is necessary for the in vitro assembly process of the 50S ribosomal subunit. It is not involved in the protein synthesizing functions of that subunit. The sequence is that of Large ribosomal subunit protein bL20c from Cryptomeria japonica (Japanese cedar).